We begin with the raw amino-acid sequence, 171 residues long: uncharacterized protein (171 aa).

This is an uncharacterized protein from Mycobacterium tuberculosis (strain ATCC 25618 / H37Rv).